The primary structure comprises 284 residues: D-tagatose-1,6-bisphosphate aldolase subunit GatY (284 aa).

Catalysis depends on Asp82, which acts as the Proton donor. Positions 83 and 180 each coordinate Zn(2+). Gly181 provides a ligand contact to dihydroxyacetone phosphate. Zn(2+) is bound at residue His208. Residues 209 to 211 and 230 to 233 contribute to the dihydroxyacetone phosphate site; these read GAS and NVAT.

This sequence belongs to the class II fructose-bisphosphate aldolase family. TagBP aldolase GatY subfamily. Forms a complex with GatZ. Requires Zn(2+) as cofactor.

It carries out the reaction D-tagatofuranose 1,6-bisphosphate = D-glyceraldehyde 3-phosphate + dihydroxyacetone phosphate. Its pathway is carbohydrate metabolism; D-tagatose 6-phosphate degradation; D-glyceraldehyde 3-phosphate and glycerone phosphate from D-tagatose 6-phosphate: step 2/2. Its function is as follows. Catalytic subunit of the tagatose-1,6-bisphosphate aldolase GatYZ, which catalyzes the reversible aldol condensation of dihydroxyacetone phosphate (DHAP or glycerone-phosphate) with glyceraldehyde 3-phosphate (G3P) to produce tagatose 1,6-bisphosphate (TBP). Requires GatZ subunit for full activity and stability. Is involved in the catabolism of galactitol. This Shigella dysenteriae serotype 1 (strain Sd197) protein is D-tagatose-1,6-bisphosphate aldolase subunit GatY.